We begin with the raw amino-acid sequence, 396 residues long: Pectate lyase 5 (396 aa).

The first 25 residues, 1–25 (MGIKHCCYILYFTLALVTLLQPVRS), serve as a signal peptide directing secretion. A glycan (N-linked (GlcNAc...) asparagine) is linked at asparagine 36. A disulfide bond links cysteine 53 and cysteine 70. Aspartate 193, aspartate 217, and aspartate 221 together coordinate Ca(2+). Arginine 273 is an active-site residue.

This sequence belongs to the polysaccharide lyase 1 family. Amb a subfamily. As to quaternary structure, monomer. Ca(2+) serves as cofactor. Post-translationally, the N-terminus is blocked. As to expression, pollen and flowers.

It carries out the reaction Eliminative cleavage of (1-&gt;4)-alpha-D-galacturonan to give oligosaccharides with 4-deoxy-alpha-D-galact-4-enuronosyl groups at their non-reducing ends.. Its pathway is glycan metabolism; pectin degradation; 2-dehydro-3-deoxy-D-gluconate from pectin: step 2/5. Has pectate lyase activity. The protein is Pectate lyase 5 of Ambrosia artemisiifolia (Common ragweed).